The following is a 145-amino-acid chain: S-adenosylmethionine synthase 2 (145 aa).

ATP-binding positions include 6–7, alanine 23, lysine 27, and lysine 31; that span reads RK. Residue lysine 31 coordinates L-methionine.

The protein belongs to the AdoMet synthase family. In terms of assembly, homotetramer. Mn(2+) is required as a cofactor. Mg(2+) serves as cofactor. Requires Co(2+) as cofactor. It depends on K(+) as a cofactor. In terms of tissue distribution, mainly in floral buds and roots.

The protein localises to the cytoplasm. The enzyme catalyses L-methionine + ATP + H2O = S-adenosyl-L-methionine + phosphate + diphosphate. The protein operates within amino-acid biosynthesis; S-adenosyl-L-methionine biosynthesis; S-adenosyl-L-methionine from L-methionine: step 1/1. Functionally, catalyzes the formation of S-adenosylmethionine from methionine and ATP. The reaction comprises two steps that are both catalyzed by the same enzyme: formation of S-adenosylmethionine (AdoMet) and triphosphate, and subsequent hydrolysis of the triphosphate. The polypeptide is S-adenosylmethionine synthase 2 (SMS-2) (Petroselinum crispum (Parsley)).